A 380-amino-acid polypeptide reads, in one-letter code: ATPase ASNA1 homolog (380 aa).

ATP is bound at residue 48-55 (KGGVGKTT). Aspartate 77 is a catalytic residue. ATP contacts are provided by glutamate 248 and asparagine 275.

The protein belongs to the arsA ATPase family. In terms of assembly, homodimer.

It is found in the cytoplasm. The protein resides in the endoplasmic reticulum. ATPase required for the post-translational delivery of tail-anchored (TA) proteins to the endoplasmic reticulum. Recognizes and selectively binds the transmembrane domain of TA proteins in the cytosol. This complex then targets to the endoplasmic reticulum by membrane-bound receptors, where the tail-anchored protein is released for insertion. This process is regulated by ATP binding and hydrolysis. ATP binding drives the homodimer towards the closed dimer state, facilitating recognition of newly synthesized TA membrane proteins. ATP hydrolysis is required for insertion. Subsequently, the homodimer reverts towards the open dimer state, lowering its affinity for the membrane-bound receptor, and returning it to the cytosol to initiate a new round of targeting. The polypeptide is ATPase ASNA1 homolog (Plasmodium chabaudi chabaudi).